Here is a 70-residue protein sequence, read N- to C-terminus: Cytochrome c oxidase subunit 8B, mitochondrial (70 aa).

The transit peptide at 1 to 24 (MPRLPPILRLLQAPAKFTVVPKAH) directs the protein to the mitochondrion. Residues 25-38 (VSAKPAKTPTSAVE) lie on the Mitochondrial matrix side of the membrane. The chain crosses the membrane as a helical span at residues 39–60 (QAVGISAIVVGFMVPAGWVLAH). At 61-70 (LESYKKSSAA) the chain is on the mitochondrial intermembrane side.

The protein belongs to the cytochrome c oxidase VIII family. Component of the cytochrome c oxidase (complex IV, CIV), a multisubunit enzyme composed of 14 subunits. The complex is composed of a catalytic core of 3 subunits MT-CO1, MT-CO2 and MT-CO3, encoded in the mitochondrial DNA, and 11 supernumerary subunits COX4I, COX5A, COX5B, COX6A, COX6B, COX6C, COX7A, COX7B, COX7C, COX8 and NDUFA4, which are encoded in the nuclear genome. The complex exists as a monomer or a dimer and forms supercomplexes (SCs) in the inner mitochondrial membrane with NADH-ubiquinone oxidoreductase (complex I, CI) and ubiquinol-cytochrome c oxidoreductase (cytochrome b-c1 complex, complex III, CIII), resulting in different assemblies (supercomplex SCI(1)III(2)IV(1) and megacomplex MCI(2)III(2)IV(2)).

The protein resides in the mitochondrion inner membrane. Its pathway is energy metabolism; oxidative phosphorylation. Functionally, component of the cytochrome c oxidase, the last enzyme in the mitochondrial electron transport chain which drives oxidative phosphorylation. The respiratory chain contains 3 multisubunit complexes succinate dehydrogenase (complex II, CII), ubiquinol-cytochrome c oxidoreductase (cytochrome b-c1 complex, complex III, CIII) and cytochrome c oxidase (complex IV, CIV), that cooperate to transfer electrons derived from NADH and succinate to molecular oxygen, creating an electrochemical gradient over the inner membrane that drives transmembrane transport and the ATP synthase. Cytochrome c oxidase is the component of the respiratory chain that catalyzes the reduction of oxygen to water. Electrons originating from reduced cytochrome c in the intermembrane space (IMS) are transferred via the dinuclear copper A center (CU(A)) of subunit 2 and heme A of subunit 1 to the active site in subunit 1, a binuclear center (BNC) formed by heme A3 and copper B (CU(B)). The BNC reduces molecular oxygen to 2 water molecules using 4 electrons from cytochrome c in the IMS and 4 protons from the mitochondrial matrix. This is Cytochrome c oxidase subunit 8B, mitochondrial (Cox8b) from Mus musculus (Mouse).